A 225-amino-acid polypeptide reads, in one-letter code: Single-pass membrane and coiled-coil domain-containing protein 3 (225 aa).

Residues 62–92 (IKENCDLIIQAIMKIQKELQKVDEALKDKLE) are a coiled coil. Residues 155–175 (IGASLLGSIGVAVLGLGIDMI) form a helical membrane-spanning segment. Residues 183-207 (VEKTQLQAAIKSYEKHLVEFKSASE) adopt a coiled-coil conformation.

It localises to the membrane. This Homo sapiens (Human) protein is Single-pass membrane and coiled-coil domain-containing protein 3 (SMCO3).